The following is a 322-amino-acid chain: Helix-loop-helix 34 (322 aa).

Basic and acidic residues predominate over residues 1–11; sequence METNLSEEKQK. Residues 1–23 form a disordered region; the sequence is METNLSEEKQKPSKSQAQQRRQM. In terms of domain architecture, bHLH spans 8-62; the sequence is EKQKPSKSQAQQRRQMENYEFSQLANELPLARAISGQHIDKTTMVRLATAYIKLH. PAS domains follow at residues 82–152 and 203–276; these read DSLW…DLNW and PTPV…FNLG.

Efficient DNA binding requires dimerization with another bHLH protein. Expressed in a small subset of neurons, probably AVJL and AVJR. Expressed in the AVH neurons.

It is found in the nucleus. Functionally, transcription factor. Involved in specifying AVH neuron identity, acting in concert with unc-42. Involved in serotonin-mediated feeding behavior, probably acting by modulating expression of genes involved in glutamate signaling. The sequence is that of Helix-loop-helix 34 (hlh-34) from Caenorhabditis elegans.